The primary structure comprises 140 residues: L-fucose mutarotase (140 aa).

H22 (proton donor) is an active-site residue. Substrate is bound by residues D30, R107, and 129 to 131 (YGN).

Belongs to the RbsD / FucU family. FucU mutarotase subfamily. In terms of assembly, homodecamer.

The protein resides in the cytoplasm. The catalysed reaction is alpha-L-fucose = beta-L-fucose. Its pathway is carbohydrate metabolism; L-fucose metabolism. Involved in the anomeric conversion of L-fucose. The chain is L-fucose mutarotase from Salmonella paratyphi B (strain ATCC BAA-1250 / SPB7).